We begin with the raw amino-acid sequence, 264 residues long: Small ribosomal subunit protein eS1 (264 aa).

The disordered stretch occupies residues 233–264 (GEGGGAGKPSGDEAGAKVERADGYEPPVQESV). Positions 242-255 (SGDEAGAKVERADG) are enriched in basic and acidic residues.

This sequence belongs to the eukaryotic ribosomal protein eS1 family. Component of the small ribosomal subunit. Mature ribosomes consist of a small (40S) and a large (60S) subunit. The 40S subunit contains about 33 different proteins and 1 molecule of RNA (18S). The 60S subunit contains about 49 different proteins and 3 molecules of RNA (25S, 5.8S and 5S).

The protein localises to the cytoplasm. This is Small ribosomal subunit protein eS1 from Eimeria tenella (Coccidian parasite).